The primary structure comprises 368 residues: Histidinol dehydrogenase (368 aa).

The substrate site is built by Thr-197, Gln-218, and His-221. Zn(2+) is bound by residues Gln-218 and His-221. Catalysis depends on proton acceptor residues Glu-276 and His-277. Positions 277, 306, 358, and 363 each coordinate substrate. Asp-306 serves as a coordination point for Zn(2+). His-363 is a Zn(2+) binding site.

Belongs to the histidinol dehydrogenase family. The cofactor is Zn(2+).

The enzyme catalyses L-histidinol + 2 NAD(+) + H2O = L-histidine + 2 NADH + 3 H(+). It functions in the pathway amino-acid biosynthesis; L-histidine biosynthesis; L-histidine from 5-phospho-alpha-D-ribose 1-diphosphate: step 9/9. In terms of biological role, catalyzes the sequential NAD-dependent oxidations of L-histidinol to L-histidinaldehyde and then to L-histidine. The sequence is that of Histidinol dehydrogenase from Pyrobaculum aerophilum (strain ATCC 51768 / DSM 7523 / JCM 9630 / CIP 104966 / NBRC 100827 / IM2).